A 101-amino-acid polypeptide reads, in one-letter code: Small ribosomal subunit protein uS14 (101 aa).

The protein belongs to the universal ribosomal protein uS14 family. As to quaternary structure, part of the 30S ribosomal subunit. Contacts proteins S3 and S10.

Its function is as follows. Binds 16S rRNA, required for the assembly of 30S particles and may also be responsible for determining the conformation of the 16S rRNA at the A site. The sequence is that of Small ribosomal subunit protein uS14 from Pseudomonas putida (strain GB-1).